Here is a 339-residue protein sequence, read N- to C-terminus: MAGRVKIKQKELIDSTVKNKNVMNLFHEIIGSKGNINFSVVWPKFKKIKQSVYDYISTLSVLEKASVMQNFEDDKKLLELFVQKLWAAYEGYFKYPEIEKYEVEGQVNFNLVPQYVLEKFSQLYRIRINSELVTLILNSCAFMSKYNDYILKKDPYILTITPGLCFSPIPNFEDLNFKHLYNSDKNSQHDKDFIMFILYKLYMAALGVYNAISIPDIDVEDLENIILSSVSQIKKQIPRCKDAFNKIESSVHLLRKNFNTYYSDYVGSGYNPTIIMEQYIKDISQDSKNISPRISYQFRTIIKYYRDMIATKHQTMDPQVLNLVKHVEKKLDMLDREKN.

It belongs to the asfivirus H339R family. In terms of assembly, interacts with NACA (alpha chain of nascent polypeptide-associated complex).

The protein resides in the host cytoplasm. The protein localises to the host nucleus. Its subcellular location is the virion. In African swine fever virus (isolate Warthog/Namibia/Wart80/1980) (ASFV), this protein is Protein H339R.